The sequence spans 349 residues: 5-deoxyribose 1-phosphate isomerase (349 aa).

Substrate-binding positions include 49 to 51, arginine 92, and glutamine 199; that span reads RGA. Catalysis depends on aspartate 240, which acts as the Proton donor. A substrate-binding site is contributed by 250-251; that stretch reads NK.

Belongs to the EIF-2B alpha/beta/delta subunits family. DrdI subfamily.

The enzyme catalyses 5-deoxy-alpha-D-ribose 1-phosphate = 5-deoxy-D-ribulose 1-phosphate. Its pathway is carbohydrate degradation. Functionally, catalyzes the isomerization of 5-deoxy-alpha-D-ribose 1-phosphate to 5-deoxy-D-ribulose 1-phosphate, as part of a 5-deoxyribose salvage pathway that recycles this toxic radical SAM enzyme by-product to mainstream metabolites. The sequence is that of 5-deoxyribose 1-phosphate isomerase from Clostridium botulinum (strain Langeland / NCTC 10281 / Type F).